Consider the following 687-residue polypeptide: RNA-binding protein VTS1 (687 aa).

Residues 1–10 show a composition bias toward basic residues; the sequence is MASHTLRPHR. 3 disordered regions span residues 1–115, 248–341, and 526–598; these read MASH…TPEA, AAAK…PGIG, and SPFN…AGVA. Residues 29–41 are compositionally biased toward polar residues; that stretch reads TRQSLGPPTSGNS. Positions 52–68 are enriched in low complexity; that stretch reads GLASPSSPSQPRHVSSS. The span at 287–301 shows a compositional bias: polar residues; it reads GLESNMSGRSRSKSP. A compositionally biased stretch (basic and acidic residues) spans 305–324; sequence PRPKSTDFSGKPRESLRRES. The segment covering 526 to 539 has biased composition (polar residues); it reads SPFNASAPSLQPGL. Residues 550–566 show a composition bias toward low complexity; that stretch reads QSSHLNQHYNQHQQQHQ. Over residues 585 to 597 the composition is skewed to gly residues; sequence QTGGGGAGGGAGV. Residues 606 to 667 enclose the SAM domain; that stretch reads KVLEDVPNWL…LKVFYNVRTK (62 aa).

The protein belongs to the VTS1 family. Monomer. Binds to RNA.

The protein localises to the cytoplasm. The protein resides in the cytosol. Its subcellular location is the P-body. RNA-binding protein involved in post-transcriptional regulation through transcript degradation. This chain is RNA-binding protein VTS1, found in Cryptococcus neoformans var. grubii serotype A (strain H99 / ATCC 208821 / CBS 10515 / FGSC 9487) (Filobasidiella neoformans var. grubii).